The sequence spans 233 residues: Endonuclease V (233 aa).

Mg(2+) contacts are provided by D48 and D116.

The protein belongs to the endonuclease V family. It depends on Mg(2+) as a cofactor.

The protein localises to the cytoplasm. It catalyses the reaction Endonucleolytic cleavage at apurinic or apyrimidinic sites to products with a 5'-phosphate.. Its function is as follows. DNA repair enzyme involved in the repair of deaminated bases. Selectively cleaves double-stranded DNA at the second phosphodiester bond 3' to a deoxyinosine leaving behind the intact lesion on the nicked DNA. The polypeptide is Endonuclease V (Streptomyces coelicolor (strain ATCC BAA-471 / A3(2) / M145)).